A 108-amino-acid polypeptide reads, in one-letter code: UPF0145 protein AF_0869 (108 aa).

This sequence belongs to the UPF0145 family.

In Archaeoglobus fulgidus (strain ATCC 49558 / DSM 4304 / JCM 9628 / NBRC 100126 / VC-16), this protein is UPF0145 protein AF_0869.